The sequence spans 592 residues: MSLGITGKIYRVSGPLVIAENMRGSKVYEVVEVGSDRLIGEIIGVEGDKAIIQVYEDTSGLRVGDPVYGTGYPLAAELGPGLVGSIYDGIQRPLPLLQELVGFFVKRGVKAKPLPRNKKWHFKPLVKQGEKVGPDDVIGYVEETPVIKHYIMIPPDTHGVVEEIVGEGEYTIVDPIARINGKEIVMLQKWPVRKPRPYREKLEHREPVLTGQRVIDFFFPLAKGGKAAIPGGFGTGKTVTLQQLTKWSAVDIAIYVGCGERGNEMADALHSFRRLVDPRTGKALVERSVFIANTSNMPVAARETSIFLGATIGEYFRDMGYHVLMVADSTSRWAEAMREISGRLEELPGEEGYPAYLGSRLASFYERSGYVKTLGRPDRTGSLTIMGAVSPPGADFSEPVTQATLRIVRALYALDVNLAYRRHYPAINWLISYSLYVDNVTDWWHKNIDPSWRELREKALAILQKEAELEELVRLVGAEALPEEDKLLLEVARMIREDFLQQNAFHEIDTYCPPRKAVLMMKAIMLFYELGLEAIKRGISMEKIRELKSRVKIARMKEIPNIDFEDAFKSLFEDIRRDFESLMKEAETIAEL.

Position 231 to 238 (231 to 238) interacts with ATP; it reads GGFGTGKT.

This sequence belongs to the ATPase alpha/beta chains family. Has multiple subunits with at least A(3), B(3), C, D, E, F, H, I and proteolipid K(x).

It localises to the cell membrane. It catalyses the reaction ATP + H2O + 4 H(+)(in) = ADP + phosphate + 5 H(+)(out). Component of the A-type ATP synthase that produces ATP from ADP in the presence of a proton gradient across the membrane. The A chain is the catalytic subunit. This is A-type ATP synthase subunit A from Staphylothermus marinus (strain ATCC 43588 / DSM 3639 / JCM 9404 / F1).